The chain runs to 496 residues: Catalase isozyme 3 (496 aa).

Positions 1-25 (MTMDPTKFRPSSSHDTTVTTTNAGA) are disordered. Polar residues predominate over residues 9–23 (RPSSSHDTTVTTTNA). Residues H67 and N140 contribute to the active site. Position 351 (Y351) interacts with heme. Residues 402–422 (PLRQAAPPTPLPPRPVAGRRE) are disordered.

The protein belongs to the catalase family. As to quaternary structure, homotetramer. Heme is required as a cofactor. In terms of tissue distribution, leaf mesophyll cells, pericarp, seedling roots and the coleoptile.

The protein resides in the mitochondrion. The enzyme catalyses 2 H2O2 = O2 + 2 H2O. Occurs in almost all aerobically respiring organisms and serves to protect cells from the toxic effects of hydrogen peroxide. Its levels are highest in the light period and are lowest in the dark period, hence it may be important for scavenging hydrogen peroxide at night, rather than during the day. This Zea mays (Maize) protein is Catalase isozyme 3 (CAT3).